A 299-amino-acid chain; its full sequence is uncharacterized protein (299 aa).

The 59-residue stretch at 1–59 (MDKIHAMQLFIKVAELESFSRAADFFALPKGSVSRQIQALEHQLGTQLLQRTTRRVKLT) folds into the HTH lysR-type domain. Residues 19–38 (FSRAADFFALPKGSVSRQIQ) constitute a DNA-binding region (H-T-H motif).

Belongs to the LysR transcriptional regulatory family.

This is an uncharacterized protein from Escherichia coli (strain K12).